The chain runs to 467 residues: Methylenetetrahydrofolate--tRNA-(uracil-5-)-methyltransferase TrmFO (467 aa).

Position 11–16 (11–16 (GAGLAG)) interacts with FAD.

It belongs to the MnmG family. TrmFO subfamily. It depends on FAD as a cofactor.

It localises to the cytoplasm. The enzyme catalyses uridine(54) in tRNA + (6R)-5,10-methylene-5,6,7,8-tetrahydrofolate + NADH + H(+) = 5-methyluridine(54) in tRNA + (6S)-5,6,7,8-tetrahydrofolate + NAD(+). The catalysed reaction is uridine(54) in tRNA + (6R)-5,10-methylene-5,6,7,8-tetrahydrofolate + NADPH + H(+) = 5-methyluridine(54) in tRNA + (6S)-5,6,7,8-tetrahydrofolate + NADP(+). In terms of biological role, catalyzes the folate-dependent formation of 5-methyl-uridine at position 54 (M-5-U54) in all tRNAs. This chain is Methylenetetrahydrofolate--tRNA-(uracil-5-)-methyltransferase TrmFO, found in Prochlorococcus marinus (strain NATL2A).